The following is a 416-amino-acid chain: MENSKILIRNAAQIVTCHGDKARRGAEMSDLGVIEDGAVAMSDGVITHVGPTEEVLRNIHAEDYLEIRAENQAVLPGFVDSHTHFIFGGYREEEFSWRLRGDSYMSIMERGGGIVNTMKATRESDFDTLWDRGEERLDELFSMGVTTVEGKSGYGLDLQTELVQLRVMSDLNESHPMDVVSTFLGAHAVPPEFAGRTDDYVDYMIEEVLPAIRAEHTVTFCDVFCEKGVFSLEQSERLLRAARHHRFKLKMHADEIVPFGGAELAASLKCVSADHLLHISDTGIKRLARAGVVATLLPLTAFSLNEPYAPARKMIDAGCAVALASDLNPGSCFSASIPMMIALACIYMKMTPEEAVTALTINGAAAVGRASEIGSISVGKRADVILLKYPSYKFLPYHVGMNLVDTVIKDGELYMM.

Residues His-82 and His-84 each contribute to the Fe(3+) site. Residues His-82 and His-84 each contribute to the Zn(2+) site. Arg-91, Tyr-154, and His-187 together coordinate 4-imidazolone-5-propanoate. Tyr-154 contacts N-formimidoyl-L-glutamate. His-252 provides a ligand contact to Fe(3+). Position 252 (His-252) interacts with Zn(2+). Glu-255 contributes to the 4-imidazolone-5-propanoate binding site. Asp-326 contributes to the Fe(3+) binding site. Residue Asp-326 coordinates Zn(2+). Residues Asn-328 and Gly-330 each coordinate N-formimidoyl-L-glutamate. Position 331 (Ser-331) interacts with 4-imidazolone-5-propanoate.

The protein belongs to the metallo-dependent hydrolases superfamily. HutI family. Requires Zn(2+) as cofactor. It depends on Fe(3+) as a cofactor.

Its subcellular location is the cytoplasm. It catalyses the reaction 4-imidazolone-5-propanoate + H2O = N-formimidoyl-L-glutamate. The protein operates within amino-acid degradation; L-histidine degradation into L-glutamate; N-formimidoyl-L-glutamate from L-histidine: step 3/3. Its function is as follows. Catalyzes the hydrolytic cleavage of the carbon-nitrogen bond in imidazolone-5-propanoate to yield N-formimidoyl-L-glutamate. It is the third step in the universal histidine degradation pathway. This is Imidazolonepropionase from Parabacteroides distasonis (strain ATCC 8503 / DSM 20701 / CIP 104284 / JCM 5825 / NCTC 11152).